Reading from the N-terminus, the 827-residue chain is ADP-ribosylation factor GTPase-activating protein AGD3 (827 aa).

Residues 1–225 (MHFTKLDDSP…INQVLTYAQQ (225 aa)) form the BAR domain. 2 coiled-coil regions span residues 116–139 (HEVK…REKF) and 223–253 (AQQS…RESR). Residues 246–269 (RQVDRESRWGSNGSNGSPNGDGIQ) are disordered. Positions 255-267 (GSNGSNGSPNGDG) are enriched in low complexity. The PH domain occupies 292 to 430 (QTIRQGYLSK…WIEKITGVIA (139 aa)). Positions 439-467 (EQRLPGSPMGSGHHRSASESSSYESSEYD) are disordered. Position 445 is a phosphoserine (Ser445). One can recognise an Arf-GAP domain in the interval 501-643 (EKPIDALRKV…LFVRRSRDSD (143 aa)). Residues 516–539 (CADCGAPEPDWASLNLGVLVCIEC) form a C4-type zinc finger. ANK repeat units follow at residues 728 to 757 (GGSS…NVNA), 761 to 790 (SGQT…DPEA), and 794 to 825 (EGKT…YNHR).

Homodimer. Interacts with DRP1A. Interacts with VAB. As to expression, broadly expressed. Detected in developing veins of the leaf and root. Detected in roots, hypocotyls, cotyledons, leaves, siliques and shoot apical meristems.

It is found in the golgi apparatus. The protein resides in the trans-Golgi network. With respect to regulation, ARF GAP activity strongly enhanced by phosphatidylinositol 4-monophosphate (PIP) and moderately enhanced by phosphatidylinositol 4,5-bisphosphate (PIP2). Functionally, GTPase-activating protein (GAP) for ADP ribosylation factor (ARF). Involved in the spatial control of provascular differentiation. Required for the formation of the normal pattern of continuous secondary veins. Involved in auxin signaling but not in polar auxin transport or in auxin responses. Required for PIN1 internalization in roots. The sequence is that of ADP-ribosylation factor GTPase-activating protein AGD3 (AGD3) from Arabidopsis thaliana (Mouse-ear cress).